The chain runs to 327 residues: AA9 family lytic polysaccharide monooxygenase B (327 aa).

The N-terminal stretch at 1-19 (MKSFTATALAALLAQQAAA) is a signal peptide. Residues His-20 and His-98 each contribute to the Cu(2+) site. A disulfide bridge connects residues Cys-68 and Cys-192. His-178 and Gln-187 together coordinate O2. Position 189 (Tyr-189) interacts with Cu(2+). Over residues 264 to 280 (SPTTSLTPPVSTSTPAP) the composition is skewed to low complexity. A disordered region spans residues 264–284 (SPTTSLTPPVSTSTPAPGNGG). Positions 291-327 (CTVQKYGQCGGQGYTGCTTCAAGSTCNTTNQWYHQCV) constitute a CBM1 domain. Asn-317 carries an N-linked (GlcNAc...) asparagine glycan.

It belongs to the polysaccharide monooxygenase AA9 family. The cofactor is Cu(2+).

It localises to the secreted. The catalysed reaction is [(1-&gt;4)-beta-D-glucosyl]n+m + reduced acceptor + O2 = 4-dehydro-beta-D-glucosyl-[(1-&gt;4)-beta-D-glucosyl]n-1 + [(1-&gt;4)-beta-D-glucosyl]m + acceptor + H2O.. Its function is as follows. Lytic polysaccharide monooxygenase (LPMO) that depolymerizes crystalline and amorphous polysaccharides via the oxidation of scissile alpha- or beta-(1-4)-glycosidic bonds, yielding C1 or C4 oxidation products. Catalysis by LPMOs requires the reduction of the active-site copper from Cu(II) to Cu(I) by a reducing agent and H(2)O(2) or O(2) as a cosubstrate. In Podospora anserina (strain S / ATCC MYA-4624 / DSM 980 / FGSC 10383) (Pleurage anserina), this protein is AA9 family lytic polysaccharide monooxygenase B (LPMO9B).